A 446-amino-acid chain; its full sequence is N-succinylarginine dihydrolase (446 aa).

Substrate is bound by residues 19-28 (AGLSYGNVAS), N110, and 137-138 (HR). Residue E174 is part of the active site. R214 contributes to the substrate binding site. H250 is an active-site residue. 2 residues coordinate substrate: D252 and N363. C369 acts as the Nucleophile in catalysis.

The protein belongs to the succinylarginine dihydrolase family. Homodimer.

It carries out the reaction N(2)-succinyl-L-arginine + 2 H2O + 2 H(+) = N(2)-succinyl-L-ornithine + 2 NH4(+) + CO2. Its pathway is amino-acid degradation; L-arginine degradation via AST pathway; L-glutamate and succinate from L-arginine: step 2/5. Its function is as follows. Catalyzes the hydrolysis of N(2)-succinylarginine into N(2)-succinylornithine, ammonia and CO(2). The protein is N-succinylarginine dihydrolase of Pseudoalteromonas atlantica (strain T6c / ATCC BAA-1087).